Consider the following 333-residue polypeptide: Probable 4-hydroxyproline 2-epimerase (333 aa).

Cysteine 90 acts as the Proton acceptor in catalysis. Substrate contacts are provided by residues 91–92 (GH), histidine 223, and aspartate 249. The active-site Proton donor is cysteine 253. 254-255 (GT) contributes to the substrate binding site.

The protein belongs to the proline racemase family.

The catalysed reaction is trans-4-hydroxy-L-proline = cis-4-hydroxy-D-proline. Its function is as follows. Likely catalyzes the epimerization of trans-4-hydroxy-L-proline (t4LHyp) to cis-4-hydroxy-D-proline (c4DHyp). May be involved in the degradation pathway that converts t4LHyp to alpha-ketoglutarate, which would allow R.meliloti to grow on t4LHyp as a sole carbon source. This Rhizobium meliloti (strain 1021) (Ensifer meliloti) protein is Probable 4-hydroxyproline 2-epimerase.